We begin with the raw amino-acid sequence, 310 residues long: Aspartate carbamoyltransferase catalytic subunit (310 aa).

2 residues coordinate carbamoyl phosphate: Arg-59 and Thr-60. Lys-87 is an L-aspartate binding site. Arg-109, His-139, and Gln-142 together coordinate carbamoyl phosphate. Arg-172 and Arg-224 together coordinate L-aspartate. 2 residues coordinate carbamoyl phosphate: Ala-265 and Pro-266.

Belongs to the aspartate/ornithine carbamoyltransferase superfamily. ATCase family. In terms of assembly, heterododecamer (2C3:3R2) of six catalytic PyrB chains organized as two trimers (C3), and six regulatory PyrI chains organized as three dimers (R2).

It catalyses the reaction carbamoyl phosphate + L-aspartate = N-carbamoyl-L-aspartate + phosphate + H(+). Its pathway is pyrimidine metabolism; UMP biosynthesis via de novo pathway; (S)-dihydroorotate from bicarbonate: step 2/3. Its function is as follows. Catalyzes the condensation of carbamoyl phosphate and aspartate to form carbamoyl aspartate and inorganic phosphate, the committed step in the de novo pyrimidine nucleotide biosynthesis pathway. In Lactococcus lactis subsp. cremoris (strain MG1363), this protein is Aspartate carbamoyltransferase catalytic subunit.